The primary structure comprises 87 residues: Tachykinin-1 (87 aa).

The first 22 residues, 1–22, serve as a signal peptide directing secretion; sequence MIRVGLILCCIFIAGVFEASSA. A propeptide spanning residues 23-37 is cleaved from the precursor; that stretch reads DDMLTAHNLIKRSEV. At M49 the chain carries Methionine amide. A propeptide spanning residues 52-87 is cleaved from the precursor; that stretch reads SEELTRRLIQHPGSMSETSKRGPPKKVSRRPYILKK. The disordered stretch occupies residues 61–87; that stretch reads QHPGSMSETSKRGPPKKVSRRPYILKK. Positions 73–87 are enriched in basic residues; the sequence is GPPKKVSRRPYILKK.

Belongs to the tachykinin family. In terms of tissue distribution, expressed in the posterior salivary gland and more specifically in the mucus-secreting gland cells.

It is found in the secreted. Tachykinins are active peptides which excite neurons, evoke behavioral responses, are potent vasodilators and secretagogues, and contract (directly or indirectly) many smooth muscles. This Octopus vulgaris (Common octopus) protein is Tachykinin-1.